The chain runs to 24 residues: Lactadherin (24 aa).

Its subcellular location is the membrane. It is found in the secreted. It localises to the cytoplasmic vesicle. The protein resides in the secretory vesicle. The protein localises to the acrosome membrane. Specific ligand for the alpha-v/beta-3 and alpha-v/beta-5 receptors. Also binds to phosphatidylserine-enriched cell surfaces in a receptor-independent manner. Zona pellucida-binding protein which may play a role in gamete interaction. Contributes to phagocytic removal of apoptotic cells in many tissues. Plays an important role in the maintenance of intestinal epithelial homeostasis and the promotion of mucosal healing. Promotes VEGF-dependent neovascularization. This chain is Lactadherin, found in Equus asinus (Donkey).